We begin with the raw amino-acid sequence, 1429 residues long: Alpha-agarase (1429 aa).

Positions 1–26 (MFKTKRSLLNSSIAISFAVLGVQAQA) are cleaved as a signal peptide. 2 consecutive CBM6 domains span residues 29–161 (LELQ…FRLT) and 211–345 (FVIQ…LTFT). Disordered regions lie at residues 349–400 (SDGG…DGVS) and 474–495 (NTPA…GEPG). Positions 369 to 378 (SSDSCPNTPT) are enriched in polar residues. In terms of domain architecture, PA14 spans 490–638 (NGGEPGDSYY…GGTNFVHPSN (149 aa)). The CBM6 3 domain maps to 662-793 (IYIQLEDFDE…QWSGDLVRLA (132 aa)).

This sequence belongs to the glycosyl hydrolase 96 family. As to quaternary structure, homodimer. It depends on Ca(2+) as a cofactor.

The enzyme catalyses Endohydrolysis of 1,3-alpha-L-galactosidic linkages in agarose, yielding agarotetraose as the major product.. In terms of biological role, alpha-agarase. Does not hydrolyze agarotetraose, agarohexaose, kappa-carrageenan, iota-carrageenan or lambda-carrageenan. This chain is Alpha-agarase, found in Alteromonas agarilytica.